The following is a 536-amino-acid chain: Heparanase (536 aa).

Residues 1–28 (MLRPLLLLWLWGRLGALTQGTPAGTAPT) form the signal peptide. Heparan sulfate group contacts are provided by residues 55–57 (DAS) and Thr90. Positions 103-150 (PTSEERSYWQSQDNNDICGSERVSADVLRKLQMEWPFQELLLLREQYQ) are cleaved as a propeptide — linker peptide. A disulfide bridge connects residues Cys120 and Cys172. Residue 151–155 (REFKN) coordinates heparan sulfate group. Asn155, Asn193, and Asn210 each carry an N-linked (GlcNAc...) asparagine glycan. Residue Glu218 is the Proton donor of the active site. Heparan sulfate group is bound by residues 263-273 (QPRGKTVKLLR), His289, and Arg296. Residues 281-410 (EVIDSLTWHH…LLFKKLVGPK (130 aa)) form a required for heterodimerization with the heparanase 8 kDa subunit region. Glu336 serves as the catalytic Nucleophile. Heparan sulfate group contacts are provided by residues 341–343 (YGG) and 382–384 (GNY). Cys430 and Cys535 are oxidised to a cystine. Residue Asn452 is glycosylated (N-linked (GlcNAc...) asparagine). The segment at 520 to 536 (FSYGFFVIRNAKIAACI) is required for transferring proheparanase to the Golgi apparatus, secretion and subsequent enzyme activity and for enhancement of PKB/AKT1 phosphorylation.

The protein belongs to the glycosyl hydrolase 79 family. In terms of assembly, heterodimer; heterodimer formation between the 8 kDa and the 50 kDa subunits is required for enzyme activity. Interacts with TF; the interaction, inhibited by heparin, enhances the generation of activated factor X and activates coagulation. Interacts with HRG; the interaction is enhanced at acidic pH, partially inhibits binding of HPSE to cell surface receptors and modulates its enzymatic activity. Interacts with SDC1; the interaction enhances the shedding of SDC1. Interacts with HPSE2. Post-translationally, proteolytically processed. The cleavage of the 65 kDa form leads to the generation of a linker peptide, and the 8 kDa and 50 kDa products. The active form, the 8/50 kDa heterodimer, is resistant to degradation. Complete removal of the linker peptide appears to be a prerequisite to the complete activation of the enzyme. N-glycosylated. Glycosylation of the 50 kDa subunit appears to be essential for its solubility.

The protein localises to the lysosome membrane. It localises to the secreted. The protein resides in the nucleus. It carries out the reaction endohydrolysis of (1-&gt;4)-beta-D-glycosidic bonds of heparan sulfate chains in heparan sulfate proteoglycan.. Its activity is regulated as follows. Inhibited by laminarin sulfate and, to a lower extent, by heparin and sulfamin. Activated by calcium and magnesium. Inhibited by EDTA. Functionally, endoglycosidase that cleaves heparan sulfate proteoglycans (HSPGs) into heparan sulfate side chains and core proteoglycans. Participates in extracellular matrix (ECM) degradation and remodeling. Selectively cleaves the linkage between a glucuronic acid unit and an N-sulfo glucosamine unit carrying either a 3-O-sulfo or a 6-O-sulfo group. Can also cleave the linkage between a glucuronic acid unit and an N-sulfo glucosamine unit carrying a 2-O-sulfo group, but not linkages between a glucuronic acid unit and a 2-O-sulfated iduronic acid moiety. It is essentially inactive at neutral pH but becomes active under acidic conditions such as during tumor invasion and in inflammatory processes. Facilitates cell migration associated with metastasis, wound healing and inflammation. Enhances shedding of syndecans, and increases endothelial invasion and angiogenesis in myelomas. Acts as a procoagulant by increasing the generation of activation factor X in the presence of tissue factor and activation factor VII. Increases cell adhesion to the extracellular matrix (ECM), independent of its enzymatic activity. Induces AKT1/PKB phosphorylation via lipid rafts increasing cell mobility and invasion. Heparin increases this AKT1/PKB activation. Regulates osteogenesis. Enhances angiogenesis through up-regulation of SRC-mediated activation of VEGF. Implicated in hair follicle inner root sheath differentiation and hair homeostasis. The polypeptide is Heparanase (Hpse) (Rattus norvegicus (Rat)).